Consider the following 384-residue polypeptide: MQDKAMLMIPGPTPVPESVLLSLGKHPIGHRSGEFSQIMAAMTAGIKWLHQTQNEVLILAASGTGAMEAGIINFLSAGDRVVVGCNGKFGDRWGEVCDAYGLTTERISAPWGQPLNPDDFKAVLDGHRQKPSKAVIVTHSETSTGVINDLEAINRHVKAHGQALIIVDAVTSLGAVSVPIDEWGLDVVGSGSQKGYMIPPGLAFVSVSPKAWEAYKTATLPKFYLDLGKYRKDAAKHTTPFTPPVNLFFALKTALEMMQAEGLEAIFQRHQRLMQATRAAMKALNLPLYAADSCASPAITAVAPQGVEAENIRSLMKKRFDIALAGGQDHLKGQIFRIGHLGFVGDRDILAAVSALEAVLAELGYTNFTPGAGVAAASRVLSTA.

Position 194 is an N6-(pyridoxal phosphate)lysine (Lys-194).

Belongs to the class-V pyridoxal-phosphate-dependent aminotransferase family. As to quaternary structure, heterodimer of a large and a small subunit. The cofactor is pyridoxal 5'-phosphate.

The protein localises to the cytoplasm. Functionally, soluble hydrogenase catalyzes both production and consumption of hydrogen from suitable artificial electron donors or acceptors. This subunit catalyzes the tritium-exchange activity. The protein is Soluble hydrogenase, small subunit of Synechococcus sp. (strain PCC 6716).